A 135-amino-acid chain; its full sequence is uncharacterized protein (135 aa).

The next 2 membrane-spanning stretches (helical) occupy residues 11–31 and 57–77; these read ILFF…GYLI and LGTA…TDAI.

The protein resides in the cell membrane. This is an uncharacterized protein from Methanocaldococcus jannaschii (strain ATCC 43067 / DSM 2661 / JAL-1 / JCM 10045 / NBRC 100440) (Methanococcus jannaschii).